Consider the following 163-residue polypeptide: Urease accessory protein UreE (163 aa).

A disordered region spans residues glutamate 134–glutamate 163.

Belongs to the UreE family.

It is found in the cytoplasm. Involved in urease metallocenter assembly. Binds nickel. Probably functions as a nickel donor during metallocenter assembly. The sequence is that of Urease accessory protein UreE from Methylobacillus flagellatus (strain ATCC 51484 / DSM 6875 / VKM B-1610 / KT).